A 176-amino-acid polypeptide reads, in one-letter code: ATP synthase subunit b 2 (176 aa).

Residues 29–49 (IFWLVITLVIIYMVLSKVALP) traverse the membrane as a helical segment.

The protein belongs to the ATPase B chain family. F-type ATPases have 2 components, F(1) - the catalytic core - and F(0) - the membrane proton channel. F(1) has five subunits: alpha(3), beta(3), gamma(1), delta(1), epsilon(1). F(0) has three main subunits: a(1), b(2) and c(10-14). The alpha and beta chains form an alternating ring which encloses part of the gamma chain. F(1) is attached to F(0) by a central stalk formed by the gamma and epsilon chains, while a peripheral stalk is formed by the delta and b chains.

Its subcellular location is the cell inner membrane. In terms of biological role, f(1)F(0) ATP synthase produces ATP from ADP in the presence of a proton or sodium gradient. F-type ATPases consist of two structural domains, F(1) containing the extramembraneous catalytic core and F(0) containing the membrane proton channel, linked together by a central stalk and a peripheral stalk. During catalysis, ATP synthesis in the catalytic domain of F(1) is coupled via a rotary mechanism of the central stalk subunits to proton translocation. Its function is as follows. Component of the F(0) channel, it forms part of the peripheral stalk, linking F(1) to F(0). The b'-subunit is a diverged and duplicated form of b found in plants and photosynthetic bacteria. In Roseobacter denitrificans (strain ATCC 33942 / OCh 114) (Erythrobacter sp. (strain OCh 114)), this protein is ATP synthase subunit b 2 (atpF2).